We begin with the raw amino-acid sequence, 350 residues long: Adenine deaminase (350 aa).

Zn(2+) is bound by residues His-24, His-26, and His-207. Glu-210 (proton donor) is an active-site residue. Asp-288 contributes to the Zn(2+) binding site. Substrate is bound at residue Asp-289.

Belongs to the metallo-dependent hydrolases superfamily. Adenosine and AMP deaminases family. Adenine deaminase type 2 subfamily. Requires Zn(2+) as cofactor.

It catalyses the reaction adenine + H2O + H(+) = hypoxanthine + NH4(+). Catalyzes the hydrolytic deamination of adenine to hypoxanthine. Plays an important role in the purine salvage pathway and in nitrogen catabolism. This Paraburkholderia xenovorans (strain LB400) protein is Adenine deaminase.